A 169-amino-acid polypeptide reads, in one-letter code: Transcription antitermination protein NusB (169 aa).

A disordered region spans residues 1 to 23 (MADSKKPAIKKPVPKGDRKANRR).

This sequence belongs to the NusB family.

Involved in transcription antitermination. Required for transcription of ribosomal RNA (rRNA) genes. Binds specifically to the boxA antiterminator sequence of the ribosomal RNA (rrn) operons. The polypeptide is Transcription antitermination protein NusB (Rhodopseudomonas palustris (strain HaA2)).